The following is a 637-amino-acid chain: MKKLQEAHLRKPITPDLLMTPSDQGDVDLDVDFAADRGNWTGKLDFLLSCIGYCVGLGNVWRFPYRAYTNGGGAFLVPYFLMLAICGIPLFFLELSLGQFSSLGPLAVWKISPLFKGAGAAMLLIVGLVAIYYNMIIAYVLFYLFASLTSNLPWEHCGNWWNTELCLEHRGPKSGNGVLPLNLSSTVSPSEEYWSRYVLHIQGSQGIGRPGEIRWNLCLCLLLAWVIVFLCILKGVKSSGKVVYFTATFPYLILLMLLVRGVTLPGAWKGIQFYLTPQFHHLLSSKVWIEAALQIFYSLGVGFGGLLTFASYNTFHQNIYRDTFIVTLGNAITSILAGFAIFSVLGYMSQELGVPVDQVAKAGPGLAFVVYPQAMTMLPLSPFWSFLFFFMLLTLGLDSQFAFLETIVTAVTDEFPYYLRPKKAVFSGLICVAMYLMGLILTTDGGMYWLVLLDDYSASFGLMVVVITTCLAVTRVYGIQRFCRDIHMMLGFKPGLYFRACWLFLSPATLLALLVYSIVKYQPSEYGSYRFPAWAELLGILMGLLSCLMIPAGMLVAVLREEGSLWERLQQASRPAMDWGPSLEENRTGMYVATLAGSQSPKPLMVHMRKYGGITSFENTAIEVDREIAEEEEESMM.

Residues 1–45 lie on the Cytoplasmic side of the membrane; that stretch reads MKKLQEAHLRKPITPDLLMTPSDQGDVDLDVDFAADRGNWTGKLD. T20 bears the Phosphothreonine mark. At S22 the chain carries Phosphoserine. 3 helical membrane-spanning segments follow: residues 46–66, 74–93, and 117–137; these read FLLS…FPYR, AFLV…LFFL, and GAGA…NMII. The Extracellular portion of the chain corresponds to 138–214; it reads AYVLFYLFAS…QGIGRPGEIR (77 aa). N-linked (GlcNAc...) asparagine glycosylation is present at N182. The next 9 helical transmembrane spans lie at 215–233, 242–259, 295–312, 324–345, 378–397, 425–443, 459–479, 500–519, and 538–556; these read WNLC…LCIL, VVYF…MLLV, IFYS…FASY, FIVT…FSVL, LPLS…TLGL, VFSG…ILTT, SFGL…VYGI, ACWL…YSIV, and LGIL…GMLV. The Cytoplasmic segment spans residues 557–637; it reads AVLREEGSLW…IAEEEEESMM (81 aa). Residues S573 and S582 each carry the phosphoserine modification. T588 is modified (phosphothreonine). Y591 carries the phosphotyrosine modification. 2 positions are modified to phosphoserine: S598 and S600.

It belongs to the sodium:neurotransmitter symporter (SNF) (TC 2.A.22) family. SLC6A7 subfamily.

It localises to the synaptic cell membrane. It catalyses the reaction L-proline(out) + chloride(out) + 2 Na(+)(out) = L-proline(in) + chloride(in) + 2 Na(+)(in). It carries out the reaction L-pipecolate(out) + chloride(out) + 2 Na(+)(out) = L-pipecolate(in) + chloride(in) + 2 Na(+)(in). In terms of biological role, brain specific sodium (and chloride)-dependent proline transporter. Terminates the action of proline by its high affinity sodium-dependent reuptake into presynaptic terminals. The chain is Sodium-dependent proline transporter from Mus musculus (Mouse).